A 201-amino-acid polypeptide reads, in one-letter code: Orotate phosphoribosyltransferase (201 aa).

5-phospho-alpha-D-ribose 1-diphosphate is bound at residue 113–121 (EDIITTGKS). The orotate site is built by threonine 117 and arginine 145.

This sequence belongs to the purine/pyrimidine phosphoribosyltransferase family. PyrE subfamily. In terms of assembly, homodimer. Mg(2+) serves as cofactor.

The enzyme catalyses orotidine 5'-phosphate + diphosphate = orotate + 5-phospho-alpha-D-ribose 1-diphosphate. It participates in pyrimidine metabolism; UMP biosynthesis via de novo pathway; UMP from orotate: step 1/2. Catalyzes the transfer of a ribosyl phosphate group from 5-phosphoribose 1-diphosphate to orotate, leading to the formation of orotidine monophosphate (OMP). This chain is Orotate phosphoribosyltransferase, found in Helicobacter acinonychis (strain Sheeba).